Consider the following 574-residue polypeptide: Phosphoenolpyruvate-protein phosphotransferase (574 aa).

Catalysis depends on histidine 190, which acts as the Tele-phosphohistidine intermediate. Arginine 297 and arginine 333 together coordinate phosphoenolpyruvate. Mg(2+) contacts are provided by glutamate 432 and aspartate 456. Residues asparagine 455–aspartate 456 and arginine 466 each bind phosphoenolpyruvate. Residue cysteine 503 is the Proton donor of the active site.

This sequence belongs to the PEP-utilizing enzyme family. Homodimer. It depends on Mg(2+) as a cofactor.

The protein resides in the cytoplasm. The enzyme catalyses L-histidyl-[protein] + phosphoenolpyruvate = N(pros)-phospho-L-histidyl-[protein] + pyruvate. General (non sugar-specific) component of the phosphoenolpyruvate-dependent sugar phosphotransferase system (sugar PTS). This major carbohydrate active-transport system catalyzes the phosphorylation of incoming sugar substrates concomitantly with their translocation across the cell membrane. Enzyme I transfers the phosphoryl group from phosphoenolpyruvate (PEP) to the phosphoryl carrier protein (HPr). The sequence is that of Phosphoenolpyruvate-protein phosphotransferase (ptsI) from Latilactobacillus sakei (Lactobacillus sakei).